The chain runs to 125 residues: Small ribosomal subunit protein uS12 (125 aa).

Positions 9–31 (RQGREVEKIKSKSPAMENSPQRR) are disordered. A 3-methylthioaspartic acid modification is found at Asp89. A disordered region spans residues 105–125 (QGVKDRKQSRSKYGAKRPKAK). Positions 113–125 (SRSKYGAKRPKAK) are enriched in basic residues.

The protein belongs to the universal ribosomal protein uS12 family. As to quaternary structure, part of the 30S ribosomal subunit. Contacts proteins S8 and S17. May interact with IF1 in the 30S initiation complex.

With S4 and S5 plays an important role in translational accuracy. In terms of biological role, interacts with and stabilizes bases of the 16S rRNA that are involved in tRNA selection in the A site and with the mRNA backbone. Located at the interface of the 30S and 50S subunits, it traverses the body of the 30S subunit contacting proteins on the other side and probably holding the rRNA structure together. The combined cluster of proteins S8, S12 and S17 appears to hold together the shoulder and platform of the 30S subunit. This Polaromonas naphthalenivorans (strain CJ2) protein is Small ribosomal subunit protein uS12.